Reading from the N-terminus, the 614-residue chain is Subtilin transport ATP-binding protein SpaT (614 aa).

Transmembrane regions (helical) follow at residues 34–54 (FLKL…SLYI), 69–89 (VSIV…SELI), 147–167 (IIQA…SIAF), 175–195 (VSLL…KIGQ), and 267–287 (IAVQ…AFAG). Residues 34-320 (FLKLIRFSII…IMTSIYSIYN (287 aa)) enclose the ABC transmembrane type-1 domain. Positions 353–593 (VVFQNVSFIY…CPLYKKMDES (241 aa)) constitute an ABC transporter domain. 387-394 (GPNGSGKK) lines the ATP pocket.

It belongs to the ABC transporter superfamily.

It localises to the cell membrane. Functionally, probably implicated in the export process of the lantibiotic subtilin. This chain is Subtilin transport ATP-binding protein SpaT (spaT), found in Bacillus subtilis.